The sequence spans 273 residues: Kit ligand (273 aa).

The N-terminal stretch at 1 to 25 (MKKTQTWIITCIYLQLLLFNPLVKT) is a signal peptide. Topologically, residues 26-214 (KEICGNPVTD…AKAPEDSGLQ (189 aa)) are extracellular. 2 cysteine pairs are disulfide-bonded: Cys29–Cys114 and Cys68–Cys163. N-linked (GlcNAc...) asparagine glycosylation is found at Asn90, Asn97, Asn145, and Asn195. Residues 190 to 210 (ASSLRNDSSSSNRKAAKAPED) form a disordered region. The segment covering 191–202 (SSLRNDSSSSNR) has biased composition (low complexity). Residues 215–237 (WTAMALPALISLVIGFAFGALYW) form a helical membrane-spanning segment. Over 238–273 (KKKQSSLTRAVENIQINEEDNEISMLQQKEREFQEV) the chain is Cytoplasmic.

The protein belongs to the SCF family. As to quaternary structure, homodimer, non-covalently linked. Heterotetramer with KIT, binding two KIT molecules; thereby mediates KIT dimerization and subsequent activation by autophosphorylation. Post-translationally, a soluble form is produced by proteolytic processing of isoform 1 in the extracellular domain. In terms of tissue distribution, expressed in the cochlea.

The protein resides in the cell membrane. It is found in the cytoplasm. The protein localises to the cytoskeleton. It localises to the cell projection. Its subcellular location is the lamellipodium. The protein resides in the filopodium. It is found in the secreted. Its function is as follows. Ligand for the receptor-type protein-tyrosine kinase KIT. Plays an essential role in the regulation of cell survival and proliferation, hematopoiesis, stem cell maintenance, gametogenesis, mast cell development, migration and function, and in melanogenesis. KITLG/SCF binding can activate several signaling pathways. Promotes phosphorylation of PIK3R1, the regulatory subunit of phosphatidylinositol 3-kinase, and subsequent activation of the kinase AKT1. KITLG/SCF and KIT also transmit signals via GRB2 and activation of RAS, RAF1 and the MAP kinases MAPK1/ERK2 and/or MAPK3/ERK1. KITLG/SCF and KIT promote activation of STAT family members STAT1, STAT3 and STAT5. KITLG/SCF and KIT promote activation of PLCG1, leading to the production of the cellular signaling molecules diacylglycerol and inositol 1,4,5-trisphosphate. KITLG/SCF acts synergistically with other cytokines, probably interleukins. The chain is Kit ligand (Kitlg) from Mus musculus (Mouse).